A 249-amino-acid polypeptide reads, in one-letter code: 2,3-bisphosphoglycerate-dependent phosphoglycerate mutase (249 aa).

Substrate contacts are provided by residues 9 to 16 (RHGQSQWN), 22 to 23 (TG), R61, 88 to 91 (ERHY), K99, 115 to 116 (RR), and 184 to 185 (GN). H10 functions as the Tele-phosphohistidine intermediate in the catalytic mechanism. E88 (proton donor/acceptor) is an active-site residue.

Belongs to the phosphoglycerate mutase family. BPG-dependent PGAM subfamily. As to quaternary structure, homodimer.

It carries out the reaction (2R)-2-phosphoglycerate = (2R)-3-phosphoglycerate. It functions in the pathway carbohydrate degradation; glycolysis; pyruvate from D-glyceraldehyde 3-phosphate: step 3/5. In terms of biological role, catalyzes the interconversion of 2-phosphoglycerate and 3-phosphoglycerate. This chain is 2,3-bisphosphoglycerate-dependent phosphoglycerate mutase, found in Xanthomonas campestris pv. campestris (strain B100).